Here is a 239-residue protein sequence, read N- to C-terminus: Sugar fermentation stimulation protein homolog (239 aa).

This sequence belongs to the SfsA family.

In Cyanothece sp. (strain PCC 7425 / ATCC 29141), this protein is Sugar fermentation stimulation protein homolog.